Consider the following 307-residue polypeptide: Zinc-alpha-2-glycoprotein (307 aa).

The N-terminal stretch at 1–17 (MVPVLLSLPLLLGPAVF) is a signal peptide. Glutamine 18 is modified (pyrrolidone carboxylic acid). An intrachain disulfide couples cysteine 118 to cysteine 181. N-linked (GlcNAc...) asparagine glycosylation is found at asparagine 123, asparagine 190, and asparagine 254. The region spanning 202 to 287 (PTVTITSRVI…DHRGFSQSLS (86 aa)) is the Ig-like C1-type domain. Cysteine 220 and cysteine 275 form a disulfide bridge.

This sequence belongs to the MHC class I family. In terms of assembly, interacts with PIP.

The protein resides in the secreted. Its function is as follows. Stimulates lipid degradation in adipocytes and causes the extensive fat losses associated with some advanced cancers. The sequence is that of Zinc-alpha-2-glycoprotein (Azgp1) from Mus musculus (Mouse).